We begin with the raw amino-acid sequence, 445 residues long: Exodeoxyribonuclease 7 large subunit (445 aa).

Belongs to the XseA family. As to quaternary structure, heterooligomer composed of large and small subunits.

Its subcellular location is the cytoplasm. It carries out the reaction Exonucleolytic cleavage in either 5'- to 3'- or 3'- to 5'-direction to yield nucleoside 5'-phosphates.. Its function is as follows. Bidirectionally degrades single-stranded DNA into large acid-insoluble oligonucleotides, which are then degraded further into small acid-soluble oligonucleotides. This chain is Exodeoxyribonuclease 7 large subunit, found in Staphylococcus aureus (strain bovine RF122 / ET3-1).